Here is a 269-residue protein sequence, read N- to C-terminus: Diaminopimelate epimerase (269 aa).

Residues Asn-15, Gln-49, and Asn-66 each coordinate substrate. The Proton donor role is filled by Cys-75. Residues Gly-76–Asn-77, Asn-155, Asn-187, and Glu-204–Arg-205 each bind substrate. Residue Cys-213 is the Proton acceptor of the active site. Gly-214–Ser-215 is a substrate binding site.

The protein belongs to the diaminopimelate epimerase family. Homodimer.

It is found in the cytoplasm. It carries out the reaction (2S,6S)-2,6-diaminopimelate = meso-2,6-diaminopimelate. Its pathway is amino-acid biosynthesis; L-lysine biosynthesis via DAP pathway; DL-2,6-diaminopimelate from LL-2,6-diaminopimelate: step 1/1. Catalyzes the stereoinversion of LL-2,6-diaminopimelate (L,L-DAP) to meso-diaminopimelate (meso-DAP), a precursor of L-lysine and an essential component of the bacterial peptidoglycan. The sequence is that of Diaminopimelate epimerase from Rickettsia canadensis (strain McKiel).